Reading from the N-terminus, the 363-residue chain is Methylthioribose-1-phosphate isomerase (363 aa).

Asp-253 functions as the Proton donor in the catalytic mechanism.

It belongs to the eIF-2B alpha/beta/delta subunits family. MtnA subfamily.

It is found in the cytoplasm. The protein localises to the nucleus. The catalysed reaction is 5-(methylsulfanyl)-alpha-D-ribose 1-phosphate = 5-(methylsulfanyl)-D-ribulose 1-phosphate. It functions in the pathway amino-acid biosynthesis; L-methionine biosynthesis via salvage pathway; L-methionine from S-methyl-5-thio-alpha-D-ribose 1-phosphate: step 1/6. Functionally, catalyzes the interconversion of methylthioribose-1-phosphate (MTR-1-P) into methylthioribulose-1-phosphate (MTRu-1-P). This Drosophila grimshawi (Hawaiian fruit fly) protein is Methylthioribose-1-phosphate isomerase.